A 330-amino-acid polypeptide reads, in one-letter code: Induced myeloid leukemia cell differentiation protein Mcl-1 homolog (330 aa).

A PEST-like region spans residues 85–155 (LAVPPEEMAA…PPEEEDDELY (71 aa)). A Phosphoserine modification is found at S101. Residue K116 forms a Glycyl lysine isopeptide (Lys-Gly) (interchain with G-Cter in ubiquitin) linkage. The disordered stretch occupies residues 129-153 (EAAKSSGADGSLPSTPPPPEEEDDE). Position 139 is a phosphoserine; by GSK3-alpha and GSK3-beta (S139). The residue at position 142 (S142) is a Phosphoserine. The residue at position 143 (T143) is a Phosphothreonine; by MAPK. Glycyl lysine isopeptide (Lys-Gly) (interchain with G-Cter in ubiquitin) cross-links involve residues K174 and K177. A BH3 motif is present at residues 189-203 (ALETLRRVGDGVQRN). Residues 232-252 (HVFKDGVTNWGRIVTLISFGA) carry the BH1 motif. The short motif at 284–299 (DWLVKQRGWDGFVEFF) is the BH2 element. The helical transmembrane segment at 307–329 (GIRNVLLAFAGVAGVGAGLAYLI) threads the bilayer.

This sequence belongs to the Bcl-2 family. As to quaternary structure, interacts with HIF3A (via C-terminus domain). Interacts with BOK, BIK, BAX, BAK1, and TPT1. Interacts with unphosphorylated BAD. Interacts with BMF, BBC3 and PMAIP1. Interacts with BOP. Interacts with BCL2L11; may sequester BCL2L11 to prevent its pro-apoptotic activity. Interacts with GIMAP5 and HSPA8/HSC70; the interaction between HSPA8 and MCL1 is impaired in the absence of GIMAP5. In terms of processing, cleaved by CASP3 during apoptosis, yielding a pro-apoptotic C-terminal fragment. Post-translationally, rapidly degraded in the absence of phosphorylation in the PEST region. Phosphorylated on Ser-139, by GSK3, in response to IL3/interleukin-3 withdrawal. Phosphorylation at Ser-139 induces ubiquitination and proteasomal degradation, abrogating the anti-apoptotic activity. Treatment with taxol or okadaic acid induces phosphorylation on additional sites. In terms of processing, ubiquitinated. Ubiquitination is induced by phosphorylation at Ser-139. Deubiquitinated by USP20; leading to increased stability. Ubiquitous. Highly expressed in heart, spleen, lung, liver, skeletal muscle and kidney. Detected at lower levels in brain, ovary, oviduct and testis.

Its subcellular location is the membrane. It is found in the cytoplasm. It localises to the mitochondrion. The protein localises to the nucleus. The protein resides in the nucleoplasm. Its function is as follows. Involved in the regulation of apoptosis versus cell survival, and in the maintenance of viability but not of proliferation. Mediates its effects by interactions with a number of other regulators of apoptosis. The polypeptide is Induced myeloid leukemia cell differentiation protein Mcl-1 homolog (Mcl1) (Rattus norvegicus (Rat)).